Consider the following 1131-residue polypeptide: DNA polymerase II large subunit (1131 aa).

Belongs to the archaeal DNA polymerase II family. Heterodimer of a large subunit and a small subunit.

It carries out the reaction DNA(n) + a 2'-deoxyribonucleoside 5'-triphosphate = DNA(n+1) + diphosphate. The enzyme catalyses Exonucleolytic cleavage in the 3'- to 5'-direction to yield nucleoside 5'-phosphates.. Its function is as follows. Possesses two activities: a DNA synthesis (polymerase) and an exonucleolytic activity that degrades single-stranded DNA in the 3'- to 5'-direction. Has a template-primer preference which is characteristic of a replicative DNA polymerase. The chain is DNA polymerase II large subunit from Methanococcus maripaludis (strain DSM 14266 / JCM 13030 / NBRC 101832 / S2 / LL).